A 192-amino-acid chain; its full sequence is Protein GrpE (192 aa).

This sequence belongs to the GrpE family. In terms of assembly, homodimer.

It is found in the cytoplasm. Participates actively in the response to hyperosmotic and heat shock by preventing the aggregation of stress-denatured proteins, in association with DnaK and GrpE. It is the nucleotide exchange factor for DnaK and may function as a thermosensor. Unfolded proteins bind initially to DnaJ; upon interaction with the DnaJ-bound protein, DnaK hydrolyzes its bound ATP, resulting in the formation of a stable complex. GrpE releases ADP from DnaK; ATP binding to DnaK triggers the release of the substrate protein, thus completing the reaction cycle. Several rounds of ATP-dependent interactions between DnaJ, DnaK and GrpE are required for fully efficient folding. The protein is Protein GrpE of Neisseria gonorrhoeae (strain NCCP11945).